We begin with the raw amino-acid sequence, 205 residues long: MTSTNGPLRVGIGGPVGSGKTALMEQLCKRFRDRYEICAITNDIYTKEDARILTVAGALPEERILGVETGGCPHTAIREDASINLAAVAEMSRRFPKLDLVLIESGGDNLAATFSPELADITLYVIDVAGGEKIPRKGGPGITRSDLLIVNKTDLAPLVGADLSVMESDTQRMRGTRPYVFASLREGTGADAVARFVEEAGGLGR.

14-21 (GPVGSGKT) contacts GTP.

This sequence belongs to the SIMIBI class G3E GTPase family. UreG subfamily. Homodimer. UreD, UreF and UreG form a complex that acts as a GTP-hydrolysis-dependent molecular chaperone, activating the urease apoprotein by helping to assemble the nickel containing metallocenter of UreC. The UreE protein probably delivers the nickel.

Its subcellular location is the cytoplasm. Functionally, facilitates the functional incorporation of the urease nickel metallocenter. This process requires GTP hydrolysis, probably effectuated by UreG. This is Urease accessory protein UreG 1 from Methylobacterium radiotolerans (strain ATCC 27329 / DSM 1819 / JCM 2831 / NBRC 15690 / NCIMB 10815 / 0-1).